We begin with the raw amino-acid sequence, 650 residues long: Gamma-tubulin complex component 4 homolog (650 aa).

Phosphoserine is present on serine 214. Phosphothreonine is present on threonine 216. Position 218 is a phosphoserine (serine 218).

This sequence belongs to the TUBGCP family.

It is found in the cytoplasm. It localises to the cytoskeleton. Its subcellular location is the microtubule organizing center. The protein localises to the centrosome. Functionally, gamma-tubulin complex is necessary for microtubule nucleation at the centrosome. This is Gamma-tubulin complex component 4 homolog (Grip75) from Drosophila melanogaster (Fruit fly).